A 212-amino-acid chain; its full sequence is MSDFAKVEQSLREEMTRIASSFFQRGYATGSAGNLSLLLPDGNLLATPTGSCLGNLDPQRLSKVTADGEWLSGDKPSKEVLFHLALYRNNPRCKAVVHLHSTWSTALSCLEGLDSNNVIRPFTPYVVMRMGNVPLVPYYRPGDKRIAQDLAELAADNQAFLLANHGPVVCGESLQEAANNMEELEETAKLIFILGDRPIRYLTAGEIAELRS.

Glu79 functions as the Proton acceptor in the catalytic mechanism. Glu79, His98, and His100 together coordinate Zn(2+). Tyr125 acts as the Proton donor in catalysis. His165 is a Zn(2+) binding site.

Belongs to the aldolase class II family. AraD/FucA subfamily. It depends on Zn(2+) as a cofactor.

It catalyses the reaction 3-dehydro-4-O-phospho-D-erythronate + H(+) = dihydroxyacetone phosphate + CO2. It carries out the reaction 3-dehydro-4-O-phospho-L-erythronate + H(+) = dihydroxyacetone phosphate + CO2. Functionally, catalyzes the decarboxylation of 3-oxo-tetronate 4-phosphate to dihydroxyacetone phosphate (DHAP) and CO(2). The protein is 3-oxo-tetronate 4-phosphate decarboxylase of Escherichia coli O6:H1 (strain CFT073 / ATCC 700928 / UPEC).